The sequence spans 71 residues: Delta-actitoxin-Avd2b 4 (71 aa).

The N-terminal stretch at 1–20 (MMNRLLVFLMLGAFMLVVSA) is a signal peptide. A propeptide spanning residues 21–41 (NDAYGDEPAFKDLNQGDESLG) is cleaved from the precursor. Intrachain disulfides connect Cys46–Cys61, Cys47–Cys55, and Cys49–Cys66.

It belongs to the sea anemone short toxin (type III) family.

Its subcellular location is the secreted. It localises to the nematocyst. Its function is as follows. Voltage-gated sodium channel (Nav) inhibitor. 1 uM completely inhibits insect voltage-gated sodium channel inactivation (DmNav1 from D.melanogaster). This Anemonia viridis (Snakelocks anemone) protein is Delta-actitoxin-Avd2b 4.